Reading from the N-terminus, the 609-residue chain is UvrABC system protein C (609 aa).

In terms of domain architecture, GIY-YIG spans 16–94 (SSPGVYRMYD…IKQYMPRYNV (79 aa)). Residues 203–238 (LQVMTELVSKMEASALALEYEQAASYRDQIAALRRV) form the UVR domain.

Belongs to the UvrC family. Interacts with UvrB in an incision complex.

The protein resides in the cytoplasm. Its function is as follows. The UvrABC repair system catalyzes the recognition and processing of DNA lesions. UvrC both incises the 5' and 3' sides of the lesion. The N-terminal half is responsible for the 3' incision and the C-terminal half is responsible for the 5' incision. This is UvrABC system protein C from Shewanella sediminis (strain HAW-EB3).